The sequence spans 596 residues: Aspartate--tRNA(Asp/Asn) ligase (596 aa).

Glu-172 provides a ligand contact to L-aspartate. Residues 196–199 (QLFK) are aspartate. Position 218 (Arg-218) interacts with L-aspartate. Residues 218 to 220 (RDE) and Gln-227 contribute to the ATP site. His-455 serves as a coordination point for L-aspartate. Glu-489 is a binding site for ATP. Residue Arg-496 coordinates L-aspartate. 541–544 (GLDR) is an ATP binding site.

The protein belongs to the class-II aminoacyl-tRNA synthetase family. Type 1 subfamily. As to quaternary structure, homodimer.

It is found in the cytoplasm. The enzyme catalyses tRNA(Asx) + L-aspartate + ATP = L-aspartyl-tRNA(Asx) + AMP + diphosphate. In terms of biological role, aspartyl-tRNA synthetase with relaxed tRNA specificity since it is able to aspartylate not only its cognate tRNA(Asp) but also tRNA(Asn). Reaction proceeds in two steps: L-aspartate is first activated by ATP to form Asp-AMP and then transferred to the acceptor end of tRNA(Asp/Asn). The protein is Aspartate--tRNA(Asp/Asn) ligase of Bordetella bronchiseptica (strain ATCC BAA-588 / NCTC 13252 / RB50) (Alcaligenes bronchisepticus).